The following is a 544-amino-acid chain: Cytochrome P450 82A1 (544 aa).

C481 is a heme binding site.

Belongs to the cytochrome P450 family. It depends on heme as a cofactor.

It localises to the membrane. In Pisum sativum (Garden pea), this protein is Cytochrome P450 82A1 (CYP82A1).